We begin with the raw amino-acid sequence, 609 residues long: tRNA 5-methylaminomethyl-2-thiouridine biosynthesis bifunctional protein MnmC (609 aa).

Residues 1–229 (MVELAAATCL…TRNTLPARAM (229 aa)) are tRNA (mnm(5)s(2)U34)-methyltransferase. Residues 237 to 609 (IGAGLAGASV…SPELPVSCAP (373 aa)) are FAD-dependent cmnm(5)s(2)U34 oxidoreductase.

It in the N-terminal section; belongs to the methyltransferase superfamily. tRNA (mnm(5)s(2)U34)-methyltransferase family. The protein in the C-terminal section; belongs to the DAO family. FAD serves as cofactor.

It localises to the cytoplasm. The enzyme catalyses 5-aminomethyl-2-thiouridine(34) in tRNA + S-adenosyl-L-methionine = 5-methylaminomethyl-2-thiouridine(34) in tRNA + S-adenosyl-L-homocysteine + H(+). Its function is as follows. Catalyzes the last two steps in the biosynthesis of 5-methylaminomethyl-2-thiouridine (mnm(5)s(2)U) at the wobble position (U34) in tRNA. Catalyzes the FAD-dependent demodification of cmnm(5)s(2)U34 to nm(5)s(2)U34, followed by the transfer of a methyl group from S-adenosyl-L-methionine to nm(5)s(2)U34, to form mnm(5)s(2)U34. This Albidiferax ferrireducens (strain ATCC BAA-621 / DSM 15236 / T118) (Rhodoferax ferrireducens) protein is tRNA 5-methylaminomethyl-2-thiouridine biosynthesis bifunctional protein MnmC (mnmC).